The following is a 471-amino-acid chain: 8-amino-7-oxononanoate synthase (471 aa).

Arg40 contributes to the substrate binding site. A pyridoxal 5'-phosphate-binding site is contributed by Gly131–Tyr132. His156 is a substrate binding site. 3 residues coordinate pyridoxal 5'-phosphate: Ser202, His230, and Thr258. Lys261 is modified (N6-(pyridoxal phosphate)lysine). A substrate-binding site is contributed by Thr377. The tract at residues Ser409–Ala471 is disordered.

Belongs to the class-II pyridoxal-phosphate-dependent aminotransferase family. BioF subfamily. Homodimer. The cofactor is pyridoxal 5'-phosphate.

The catalysed reaction is 6-carboxyhexanoyl-[ACP] + L-alanine + H(+) = (8S)-8-amino-7-oxononanoate + holo-[ACP] + CO2. It participates in cofactor biosynthesis; biotin biosynthesis. In terms of biological role, catalyzes the decarboxylative condensation of pimeloyl-[acyl-carrier protein] and L-alanine to produce 8-amino-7-oxononanoate (AON), [acyl-carrier protein], and carbon dioxide. The polypeptide is 8-amino-7-oxononanoate synthase (Burkholderia ambifaria (strain ATCC BAA-244 / DSM 16087 / CCUG 44356 / LMG 19182 / AMMD) (Burkholderia cepacia (strain AMMD))).